The following is a 228-amino-acid chain: MADS-box transcription factor 22 (228 aa).

The MADS-box domain maps to 1–61; that stretch reads MARERREIKR…GKLSHFASSS (61 aa). The 91-residue stretch at 86-176 folds into the K-box domain; it reads LNLEHSKYAH…RNQVSQISPA (91 aa). Residues 189 to 217 are disordered; the sequence is EGQSSESVMTALHSGSSQSQDNDDGSDVS.

In terms of tissue distribution, expressed in palea and stamen primordia. Expressed in shoots and coleoptiles.

It is found in the nucleus. Functionally, probable transcription factor. May be required for spikelet (rice flower) development. Transcription factor that functions to support the MADS55 in its function as negative regulator of brassinosteroid signaling. The chain is MADS-box transcription factor 22 (MADS22) from Oryza sativa subsp. japonica (Rice).